A 367-amino-acid chain; its full sequence is Phosphoribosylaminoimidazole-succinocarboxamide synthase (367 aa).

Belongs to the SAICAR synthetase family.

It carries out the reaction 5-amino-1-(5-phospho-D-ribosyl)imidazole-4-carboxylate + L-aspartate + ATP = (2S)-2-[5-amino-1-(5-phospho-beta-D-ribosyl)imidazole-4-carboxamido]succinate + ADP + phosphate + 2 H(+). It functions in the pathway purine metabolism; IMP biosynthesis via de novo pathway; 5-amino-1-(5-phospho-D-ribosyl)imidazole-4-carboxamide from 5-amino-1-(5-phospho-D-ribosyl)imidazole-4-carboxylate: step 1/2. This is Phosphoribosylaminoimidazole-succinocarboxamide synthase from Shewanella pealeana (strain ATCC 700345 / ANG-SQ1).